We begin with the raw amino-acid sequence, 184 residues long: Potassium-transporting ATPase KdpC subunit (184 aa).

A helical transmembrane segment spans residues 10-30 (LTFLMVVLFAVIYPLAIYGIA).

This sequence belongs to the KdpC family. As to quaternary structure, the system is composed of three essential subunits: KdpA, KdpB and KdpC.

It is found in the cell inner membrane. Its function is as follows. Part of the high-affinity ATP-driven potassium transport (or Kdp) system, which catalyzes the hydrolysis of ATP coupled with the electrogenic transport of potassium into the cytoplasm. This subunit acts as a catalytic chaperone that increases the ATP-binding affinity of the ATP-hydrolyzing subunit KdpB by the formation of a transient KdpB/KdpC/ATP ternary complex. This is Potassium-transporting ATPase KdpC subunit from Flavobacterium psychrophilum (strain ATCC 49511 / DSM 21280 / CIP 103535 / JIP02/86).